The sequence spans 186 residues: MVQRLKSIYLNNVIPKLNEEAKYKNVHQIPRLKKIVINCGIGEASQNAKTLEYTIRDLSIIAGQRPLVKRAKKAIASFQLRKKMPVGVSVTLRGDAMYAFLDRLINLALPRIRDFQGLNRKSFDGHGNFHLGLKEQLMFPEIDYDKIDKLRGMDICIVTTCTNDNECFQFLSALGMPFQTVSSKKL.

It belongs to the universal ribosomal protein uL5 family. As to quaternary structure, part of the 50S ribosomal subunit; contacts the 5S rRNA.

The protein localises to the plastid. The protein resides in the chloroplast. Its function is as follows. Binds 5S rRNA, forms part of the central protuberance of the 50S subunit. This chain is Large ribosomal subunit protein uL5c (rpl5), found in Chaetosphaeridium globosum (Charophycean green alga).